Reading from the N-terminus, the 800-residue chain is MAARGRRAWLSMLLGLVLGFVLASRLVLPRASELKRVGPRRRPSPEGCRPGQEASQPGGARGDARGAQLWPQGSAAEGVPRDRNFLFVGVMTAQKYLQTRAVAAYRTWSKTIPGKVEFFSSEGSDTSIPIPVVPLRGVDDSYPPQKKSFMMLKYMHDHYLDKYEWFMRADDDVYIKGDRLESFLRSLNSSEPLFLGQTGLGTTEEMGKLALEPGENFCMGGPGVILSREVLRRMAPHIGKCLREMYTTHEDVEVGRCVRRFAGVQCVWSYEMQQLFYENYEQNKKGYIRDLHSSKIHRAITLHPNKNPPYQYRLHSYMLSRKIAELRHRTIQLHREIVLMSKYSSTEIQKEDLQLGIPPSFMRFQARQREEILEWEFLTGKYLYSATDGQPPRRGMDSAQREALDDIVMQVMEMINANAKTRGRIIDFKEIQYGYRRVNPMYGAEYILDLLLLYKKHKGKKMTVPVRRHAYLQQTFSKMQFVEHEELDAQELADRINQDSGSLSFLSNSLKKLVAFQLPGSKTEHKEPKEKKINILIPLSGRFDMFVRFMGNFEKTCLIPNLNVKLVILLFNSDSNPDKAKQVELMRDYRVKYPKADMQVLPVSGGFSRALALEVGSSQFNNESLLFFCDVDLVFTAEFLQRCRANTVLGQQIYFPIIFSQYDPKIVYSGKVPSDNHFAFTQKTGFWRNYGFGITCIYKGDLVRVGGFDVSIQGWGLEDVDLFNKVVQAGLKTFRSQEVGVVHIHHPVVCDPNLDPKQYKMCLGSKASTFGSTQQLAEMWLEKNDPSYSKGGSHGSARTA.

The Cytoplasmic segment spans residues 1–7; it reads MAARGRR. A helical; Signal-anchor for type II membrane protein transmembrane segment spans residues 8–28; the sequence is AWLSMLLGLVLGFVLASRLVL. Over 29-800 the chain is Lumenal; sequence PRASELKRVG…GGSHGSARTA (772 aa). A disordered region spans residues 36–66; sequence RVGPRRRPSPEGCRPGQEASQPGGARGDARG. Asn-188 and Asn-622 each carry an N-linked (GlcNAc...) asparagine glycan. A divalent metal cation-binding residues include Asp-632 and His-746.

It belongs to the chondroitin N-acetylgalactosaminyltransferase family. Co(2+) is required as a cofactor. Requires Mn(2+) as cofactor. It depends on Cd(2+) as a cofactor.

The protein localises to the golgi apparatus. Its subcellular location is the golgi stack membrane. It localises to the secreted. It carries out the reaction 3-O-(beta-D-GlcA-(1-&gt;3)-beta-D-GalNAc-(1-&gt;4)-beta-D-GlcA-(1-&gt;3)-beta-D-Gal-(1-&gt;3)-beta-D-Gal-(1-&gt;4)-beta-D-Xyl)-L-seryl-[protein] + UDP-N-acetyl-alpha-D-galactosamine = 3-O-(beta-D-GalNAc-(1-&gt;4)-beta-D-GlcA-(1-&gt;3)-beta-D-GalNAc-(1-&gt;4)-beta-D-GlcA-(1-&gt;3)-beta-D-Gal-(1-&gt;3)-beta-D-Gal-(1-&gt;4)-beta-D-Xyl)-L-seryl-[protein] + UDP + H(+). The enzyme catalyses 3-O-{beta-D-GlcA-(1-&gt;3)-[beta-D-GalNAc-(1-&gt;4)-beta-D-GlcA-(1-&gt;3)](n)-beta-D-GalNAc-(1-&gt;4)-beta-D-GlcA-(1-&gt;3)-beta-D-Gal-(1-&gt;3)-beta-D-Gal-(1-&gt;4)-beta-D-Xyl}-L-seryl-[protein] + UDP-N-acetyl-alpha-D-galactosamine = 3-O-{[beta-D-GalNAc-(1-&gt;4)-beta-D-GlcA-(1-&gt;3)](n+1)-beta-D-GalNAc-(1-&gt;4)-beta-D-GlcA-(1-&gt;3)-beta-D-Gal-(1-&gt;3)-beta-D-Gal-(1-&gt;4)-beta-D-Xyl}-L-seryl-[protein] + UDP + H(+). The catalysed reaction is 3-O-(beta-D-GalNAc-(1-&gt;4)-beta-D-GlcA-(1-&gt;3)-beta-D-Gal-(1-&gt;3)-beta-D-Gal-(1-&gt;4)-beta-D-Xyl)-L-seryl-[protein] + UDP-alpha-D-glucuronate = 3-O-(beta-D-GlcA-(1-&gt;3)-beta-D-GalNAc-(1-&gt;4)-beta-D-GlcA-(1-&gt;3)-beta-D-Gal-(1-&gt;3)-beta-D-Gal-(1-&gt;4)-beta-D-Xyl)-L-seryl-[protein] + UDP + H(+). It catalyses the reaction 3-O-{[beta-D-GalNAc-(1-&gt;4)-beta-D-GlcA-(1-&gt;3)](n)-beta-D-GalNAc-(1-&gt;4)-beta-D-GlcA-(1-&gt;3)-beta-D-Gal-(1-&gt;3)-beta-D-Gal-(1-&gt;4)-beta-D-Xyl}-L-seryl-[protein] + UDP-alpha-D-glucuronate = 3-O-{beta-D-GlcA-(1-&gt;3)-[beta-D-GalNAc-(1-&gt;4)-beta-D-GlcA-(1-&gt;3)](n)-beta-D-GalNAc-(1-&gt;4)-beta-D-GlcA-(1-&gt;3)-beta-D-Gal-(1-&gt;3)-beta-D-Gal-(1-&gt;4)-beta-D-Xyl}-L-seryl-[protein] + UDP + H(+). Functionally, has both beta-1,3-glucuronic acid and beta-1,4-N-acetylgalactosamine transferase activity. Transfers glucuronic acid (GlcUA) from UDP-GlcUA and N-acetylgalactosamine (GalNAc) from UDP-GalNAc to the non-reducing end of the elongating chondroitin polymer. Involved in the negative control of osteogenesis likely through the modulation of NOTCH signaling. In Mus musculus (Mouse), this protein is Chondroitin sulfate synthase 1 (Chsy1).